Here is a 253-residue protein sequence, read N- to C-terminus: 5'/3'-nucleotidase SurE (253 aa).

Residues aspartate 8, aspartate 9, serine 39, and asparagine 92 each contribute to the a divalent metal cation site.

This sequence belongs to the SurE nucleotidase family. It depends on a divalent metal cation as a cofactor.

It localises to the cytoplasm. It catalyses the reaction a ribonucleoside 5'-phosphate + H2O = a ribonucleoside + phosphate. The catalysed reaction is a ribonucleoside 3'-phosphate + H2O = a ribonucleoside + phosphate. The enzyme catalyses [phosphate](n) + H2O = [phosphate](n-1) + phosphate + H(+). Nucleotidase with a broad substrate specificity as it can dephosphorylate various ribo- and deoxyribonucleoside 5'-monophosphates and ribonucleoside 3'-monophosphates with highest affinity to 3'-AMP. Also hydrolyzes polyphosphate (exopolyphosphatase activity) with the preference for short-chain-length substrates (P20-25). Might be involved in the regulation of dNTP and NTP pools, and in the turnover of 3'-mononucleotides produced by numerous intracellular RNases (T1, T2, and F) during the degradation of various RNAs. This chain is 5'/3'-nucleotidase SurE, found in Citrobacter koseri (strain ATCC BAA-895 / CDC 4225-83 / SGSC4696).